The chain runs to 200 residues: Probable molybdenum cofactor guanylyltransferase (200 aa).

GTP contacts are provided by residues 9-11 (LAG), lysine 21, aspartate 69, and aspartate 100. Mg(2+) is bound at residue aspartate 100.

This sequence belongs to the MobA family. Mg(2+) is required as a cofactor.

It is found in the cytoplasm. The catalysed reaction is Mo-molybdopterin + GTP + H(+) = Mo-molybdopterin guanine dinucleotide + diphosphate. Its function is as follows. Transfers a GMP moiety from GTP to Mo-molybdopterin (Mo-MPT) cofactor (Moco or molybdenum cofactor) to form Mo-molybdopterin guanine dinucleotide (Mo-MGD) cofactor. The protein is Probable molybdenum cofactor guanylyltransferase of Bacillus cereus (strain AH187).